The chain runs to 207 residues: MTKKTESKELPPFEYPEGYQLFAGVDEVGRGPLVGAVVTAAVILDPNNPIEGLTDSKKLTDKKRELLFPEIQEKALAWSLGRCEAHEIDELNILQATMVAMQRAIAGLNITPDFALIDGNKVPELPMAGLAVVKGDLRVQEISAASIIAKVTRDREMEELDKAYPQYGFAKHKGYPTKAHFEAIEEHGVISEHRRSFKPVKRVLGIE.

The RNase H type-2 domain maps to Q20–E207. Positions 26, 27, and 118 each coordinate a divalent metal cation.

This sequence belongs to the RNase HII family. The cofactor is Mn(2+). Requires Mg(2+) as cofactor.

The protein resides in the cytoplasm. The enzyme catalyses Endonucleolytic cleavage to 5'-phosphomonoester.. Functionally, endonuclease that specifically degrades the RNA of RNA-DNA hybrids. The sequence is that of Ribonuclease HII from Aliivibrio fischeri (strain MJ11) (Vibrio fischeri).